Consider the following 420-residue polypeptide: UPF0229 protein LPC_3097 (420 aa).

Positions 83–107 (IAGDRIKRPGGGAGGAGGNASDSGE) are disordered. Over residues 91-100 (PGGGAGGAGG) the composition is skewed to gly residues.

The protein belongs to the UPF0229 family.

In Legionella pneumophila (strain Corby), this protein is UPF0229 protein LPC_3097.